Reading from the N-terminus, the 259-residue chain is Tryptophan synthase alpha chain (259 aa).

Residues glutamate 35 and aspartate 46 each act as proton acceptor in the active site.

The protein belongs to the TrpA family. Tetramer of two alpha and two beta chains.

The enzyme catalyses (1S,2R)-1-C-(indol-3-yl)glycerol 3-phosphate + L-serine = D-glyceraldehyde 3-phosphate + L-tryptophan + H2O. It functions in the pathway amino-acid biosynthesis; L-tryptophan biosynthesis; L-tryptophan from chorismate: step 5/5. In terms of biological role, the alpha subunit is responsible for the aldol cleavage of indoleglycerol phosphate to indole and glyceraldehyde 3-phosphate. The polypeptide is Tryptophan synthase alpha chain (Methanococcus maripaludis (strain C7 / ATCC BAA-1331)).